The primary structure comprises 456 residues: Methionine aminopeptidase 2 (456 aa).

Over residues 1–11 the composition is skewed to pro residues; it reads MTIPVPKPAHP. Residues 1 to 127 form a disordered region; sequence MTIPVPKPAH…SYRTTSSEKR (127 aa). The span at 31 to 45 shows a compositional bias: acidic residues; sequence EADEEEDDDDEEGKE. A compositionally biased stretch (basic residues) spans 66-79; the sequence is KKKKKKKKKPKKKK. Substrate is bound at residue His209. A divalent metal cation contacts are provided by Asp229, Asp240, and His309. His317 lines the substrate pocket. Glu343 and Glu437 together coordinate a divalent metal cation.

Belongs to the peptidase M24A family. Methionine aminopeptidase eukaryotic type 2 subfamily. Co(2+) is required as a cofactor. The cofactor is Zn(2+). Mn(2+) serves as cofactor. It depends on Fe(2+) as a cofactor.

The protein resides in the cytoplasm. The enzyme catalyses Release of N-terminal amino acids, preferentially methionine, from peptides and arylamides.. Functionally, cotranslationally removes the N-terminal methionine from nascent proteins. The N-terminal methionine is often cleaved when the second residue in the primary sequence is small and uncharged (Met-Ala-, Cys, Gly, Pro, Ser, Thr, or Val). The sequence is that of Methionine aminopeptidase 2 from Puccinia graminis f. sp. tritici (strain CRL 75-36-700-3 / race SCCL) (Black stem rust fungus).